The primary structure comprises 179 residues: GTP-dependent dephospho-CoA kinase (179 aa).

GTP contacts are provided by Asp-50, Val-51, Val-52, Asp-69, Lys-71, and Glu-126.

This sequence belongs to the GTP-dependent DPCK family.

It carries out the reaction 3'-dephospho-CoA + GTP = GDP + CoA + H(+). Its pathway is cofactor biosynthesis; coenzyme A biosynthesis. Catalyzes the GTP-dependent phosphorylation of the 3'-hydroxyl group of dephosphocoenzyme A to form coenzyme A (CoA). This is GTP-dependent dephospho-CoA kinase from Pyrococcus horikoshii (strain ATCC 700860 / DSM 12428 / JCM 9974 / NBRC 100139 / OT-3).